The primary structure comprises 398 residues: Elongation factor Tu (398 aa).

The region spanning 10–207 (KPHVNIGTIG…TVDEYIPEPE (198 aa)) is the tr-type G domain. The tract at residues 19-26 (GHVDHGKT) is G1. 19-26 (GHVDHGKT) is a binding site for GTP. Residue Thr26 coordinates Mg(2+). Residues 63-67 (GITIN) form a G2 region. Residues 84 to 87 (DAPG) form a G3 region. Residues 84 to 88 (DAPGH) and 139 to 142 (NKVD) contribute to the GTP site. Residues 139–142 (NKVD) are G4. Residues 177 to 179 (SAL) are G5.

It belongs to the TRAFAC class translation factor GTPase superfamily. Classic translation factor GTPase family. EF-Tu/EF-1A subfamily. In terms of assembly, monomer.

The protein resides in the cytoplasm. It catalyses the reaction GTP + H2O = GDP + phosphate + H(+). Its function is as follows. GTP hydrolase that promotes the GTP-dependent binding of aminoacyl-tRNA to the A-site of ribosomes during protein biosynthesis. This chain is Elongation factor Tu, found in Streptococcus pyogenes serotype M49 (strain NZ131).